Consider the following 298-residue polypeptide: uncharacterized protein (298 aa).

Positions 194-295 (KRLNTALIAI…QLSPSQYRKS (102 aa)) constitute an HTH araC/xylS-type domain. 2 consecutive DNA-binding regions (H-T-H motif) follow at residues 214-235 (EQLA…QQHI) and 262-285 (VLAI…KNYY).

This is an uncharacterized protein from Haemophilus influenzae (strain ATCC 51907 / DSM 11121 / KW20 / Rd).